Consider the following 609-residue polypeptide: Chloride channel CLIC-like protein 1 (609 aa).

The first 25 residues, methionine 1–serine 25, serve as a signal peptide directing secretion. A run of 3 helical transmembrane segments spans residues valine 212–valine 235, phenylalanine 241–alanine 260, and valine 358–alanine 380. The disordered stretch occupies residues glutamate 398–glycine 553. 2 stretches are compositionally biased toward basic and acidic residues: residues glutamate 454 to proline 474 and glutamate 507 to glutamate 537. The span at proline 538–isoleucine 547 shows a compositional bias: low complexity.

Belongs to the chloride channel MCLC family. As to expression, expressed in the hindbrain, swim bladder and the eye at 1 day post fertilization (dpf) with increased expression at 3 dpf. At 3 dpf, most prominent expression in the retina, with strong expression in the ganglion cell layer, outer nuclear layer and the retinal pigmented epithelium.

It is found in the endoplasmic reticulum membrane. The protein resides in the golgi apparatus membrane. The protein localises to the nucleus membrane. Seems to act as a chloride ion channel. Plays a role in retina development. The sequence is that of Chloride channel CLIC-like protein 1 from Danio rerio (Zebrafish).